Here is a 369-residue protein sequence, read N- to C-terminus: Putative cyclin-F1-1 (369 aa).

A disordered region spans residues 328–350 (AQHHLESKPAGAAGVGINSSGDD).

Belongs to the cyclin family. Cyclin F subfamily.

In Oryza sativa subsp. japonica (Rice), this protein is Putative cyclin-F1-1 (CYCF1-1).